Reading from the N-terminus, the 148-residue chain is Putative transmembrane protein ORF23 (148 aa).

The first 18 residues, 1–18 (MVIILLGVSIVVPGLFLA), serve as a signal peptide directing secretion. Residues 19–118 (TETPQTNTFE…YVGWPSGAET (100 aa)) are Extracellular-facing. The chain crosses the membrane as a helical span at residues 119 to 139 (IITNIADIIIMATAVMIIGAI). The Cytoplasmic portion of the chain corresponds to 140–148 (YTGYKVSIK).

The protein localises to the host membrane. The polypeptide is Putative transmembrane protein ORF23 (His1 virus (isolate Australia/Victoria) (His1V)).